Here is a 1006-residue protein sequence, read N- to C-terminus: Phosphatidylinositol-3,5-bisphosphate 3-phosphatase MTMR3 (1006 aa).

The span at 1-10 shows a compositional bias: low complexity; the sequence is MTVTSSAAID. Residues 1–29 are disordered; it reads MTVTSSAAIDIGGGGGGRRSDRLDSDRTS. Basic and acidic residues predominate over residues 18-29; that stretch reads RRSDRLDSDRTS. In terms of domain architecture, Myotubularin phosphatase spans 224–630; it reads AWKFSEAVDE…INLRVWHEVF (407 aa). A 1,2-diacyl-sn-glycero-3-phospho-(1D-myo-inositol-3,5-bisphosphate) contacts are provided by Asn377, Asn402, and Ile403. A 1,2-diacyl-sn-glycero-3-phospho-(1D-myo-inositol-3-phosphate)-binding residues include Asn377, Asn402, and Ile403. Residue Cys463 is the Phosphocysteine intermediate of the active site. Ser464, Asp465, Gly466, Trp467, Asp468, Arg469, Lys505, and Arg509 together coordinate a 1,2-diacyl-sn-glycero-3-phospho-(1D-myo-inositol-3,5-bisphosphate). Residues Ser464, Asp465, Gly466, Trp467, Asp468, and Arg469 each coordinate a 1,2-diacyl-sn-glycero-3-phospho-(1D-myo-inositol-3-phosphate). Arg509 contacts a 1,2-diacyl-sn-glycero-3-phospho-(1D-myo-inositol-3-phosphate). Residues 641–705 are disordered; the sequence is FSPKEERPLS…PSDNTNSLPM (65 aa). A compositionally biased stretch (polar residues) spans 651 to 705; the sequence is GCTTPMNTSTSTNLVKSKSSESINSLNVDGSAKESSQQHPTCSTTPSDNTNSLPM. The segment at 818–883 adopts an FYVE-type zinc-finger fold; that stretch reads EGESGHCAYC…ACDSCYDSMH (66 aa). Positions 824, 827, 845, 848, 853, 856, 875, and 878 each coordinate Zn(2+). The disordered stretch occupies residues 886-1006; sequence DLKLSSSSTT…DVLDVNEQPL (121 aa). 2 stretches are compositionally biased toward low complexity: residues 890-901 and 913-926; these read SSSSTTTTSSST and DNNS…VSEN. Basic and acidic residues-rich tracts occupy residues 933–954 and 976–985; these read VEEK…ETKC and HSRDPLKSID.

This sequence belongs to the protein-tyrosine phosphatase family. Non-receptor class myotubularin subfamily. In terms of tissue distribution, expressed in the body wall muscle and in eggs. Expressed in head neurons. Expressed in the intestine. Expressed in pharyngeal cells, vulval muscle cells and cells of the tail region.

The protein resides in the cytoplasm. It is found in the membrane. The enzyme catalyses a 1,2-diacyl-sn-glycero-3-phospho-(1D-myo-inositol-3,5-bisphosphate) + H2O = a 1,2-diacyl-sn-glycero-3-phospho-(1D-myo-inositol-5-phosphate) + phosphate. It catalyses the reaction a 1,2-diacyl-sn-glycero-3-phospho-(1D-myo-inositol-3-phosphate) + H2O = a 1,2-diacyl-sn-glycero-3-phospho-(1D-myo-inositol) + phosphate. The catalysed reaction is 1,2-dihexadecanoyl-sn-glycero-3-phospho-(1D-myo-inositol-3-phosphate) + H2O = 1,2-dihexadecanoyl-sn-glycero-3-phospho-(1D-myo-inositol) + phosphate. It carries out the reaction 1,2-dihexadecanoyl-sn-glycero-3-phospho-(1D-myo-inositol-3,5-phosphate) + H2O = 1,2-dihexadecanoyl-sn-glycero-3-phospho-(1D-myo-inositol-5-phosphate) + phosphate. The enzyme catalyses 1,2-dioctanoyl-sn-glycero-3-phospho-(1-D-myo-inositol-3-phosphate) + H2O = 1,2-dioctanoyl-sn-glycero-3-phospho-(1D-myo-inositol) + phosphate. Inhibited by sodium vanadate and peroxide. Its function is as follows. Preferentially dephosphorylates phosphatidylinositol 3-phosphate (PI3P), and has some activity towards phosphatidylinositol 3,5-bisphosphate (PI35P). Positively regulates autophagy and is recruited to autophagosomes by PI3P where it catalyzes PI3P turnover to promote autophagosome maturation. Thought to have a role in maintenance of muscle function. Involved in locomotion and lifespan determination. This is Phosphatidylinositol-3,5-bisphosphate 3-phosphatase MTMR3 from Caenorhabditis elegans.